Consider the following 156-residue polypeptide: MTIIEGQLVANEMKIGIVVSRFNELITSKLLSGAVDGLLRHGVSEEDIDIVWVPGAFEIPYMARKMALYKDYDAIICLGVVIKGSTDHYDYVCNEVTKGIGHLNSQSDIPHIFGVLTTDNIEQAIERAGTKAGNKGYDCALSAIEMVNLDKKLRER.

5-amino-6-(D-ribitylamino)uracil contacts are provided by residues Phe-22, 56–58 (AFE), and 80–82 (VVI). Residue 85-86 (ST) coordinates (2S)-2-hydroxy-3-oxobutyl phosphate. His-88 functions as the Proton donor in the catalytic mechanism. Phe-113 provides a ligand contact to 5-amino-6-(D-ribitylamino)uracil. Arg-127 is a binding site for (2S)-2-hydroxy-3-oxobutyl phosphate.

Belongs to the DMRL synthase family.

The enzyme catalyses (2S)-2-hydroxy-3-oxobutyl phosphate + 5-amino-6-(D-ribitylamino)uracil = 6,7-dimethyl-8-(1-D-ribityl)lumazine + phosphate + 2 H2O + H(+). Its pathway is cofactor biosynthesis; riboflavin biosynthesis; riboflavin from 2-hydroxy-3-oxobutyl phosphate and 5-amino-6-(D-ribitylamino)uracil: step 1/2. Its function is as follows. Catalyzes the formation of 6,7-dimethyl-8-ribityllumazine by condensation of 5-amino-6-(D-ribitylamino)uracil with 3,4-dihydroxy-2-butanone 4-phosphate. This is the penultimate step in the biosynthesis of riboflavin. The polypeptide is 6,7-dimethyl-8-ribityllumazine synthase (Streptococcus agalactiae serotype Ia (strain ATCC 27591 / A909 / CDC SS700)).